Here is a 198-residue protein sequence, read N- to C-terminus: Recombination protein RecR (198 aa).

The C4-type zinc-finger motif lies at 56 to 71 (CTECRDFSETKICAIC). The Toprim domain occupies 79 to 174 (HQLCVVESPP…RPSRLAQGLP (96 aa)).

It belongs to the RecR family.

May play a role in DNA repair. It seems to be involved in an RecBC-independent recombinational process of DNA repair. It may act with RecF and RecO. This is Recombination protein RecR from Xylella fastidiosa (strain Temecula1 / ATCC 700964).